The primary structure comprises 303 residues: Recombination-associated protein RdgC (303 aa).

The protein belongs to the RdgC family.

The protein resides in the cytoplasm. It is found in the nucleoid. Functionally, may be involved in recombination. The protein is Recombination-associated protein RdgC of Shewanella loihica (strain ATCC BAA-1088 / PV-4).